The sequence spans 638 residues: Probable lysine-specific demethylase 4F (638 aa).

Residues 15 to 57 (IMTFYPTMEEFADFNTYVAYMESQGAHRAGLAKVIPPKEWKAR) enclose the JmjN domain. Tyr133 contacts 2-oxoglutarate. The JmjC domain occupies 143 to 309 (EESTKQWNLG…YGKVASQCSC (167 aa)). Fe cation-binding residues include His189 and Glu191. 2-oxoglutarate is bound by residues Asn199 and Lys207. Positions 235 and 241 each coordinate Zn(2+). Lys242 serves as a coordination point for 2-oxoglutarate. A Fe cation-binding site is contributed by His277. Zn(2+)-binding residues include Cys307 and Cys309. The tract at residues 426–474 (PCRGCGRGRGRGRGRGRRPRELGTEETTVQSAAKRRLSVGTGSRAPGRK) is disordered. Residues 431-443 (GRGRGRGRGRGRR) are compositionally biased toward basic residues.

It belongs to the JHDM3 histone demethylase family. Fe(2+) is required as a cofactor.

Its subcellular location is the nucleus. It catalyses the reaction N(6),N(6),N(6)-trimethyl-L-lysyl(9)-[histone H3] + 2 2-oxoglutarate + 2 O2 = N(6)-methyl-L-lysyl(9)-[histone H3] + 2 formaldehyde + 2 succinate + 2 CO2. Functionally, probable histone demethylase that specifically demethylates 'Lys-9' of histone H3, thereby playing a central role in histone code. This is Probable lysine-specific demethylase 4F from Homo sapiens (Human).